A 231-amino-acid chain; its full sequence is Orotidine 5'-phosphate decarboxylase (231 aa).

Residues aspartate 11, lysine 34, 61–70, threonine 117, arginine 179, glutamine 188, glycine 208, and arginine 209 contribute to the substrate site; that span reads DLKLHDIPNT. Lysine 63 (proton donor) is an active-site residue.

The protein belongs to the OMP decarboxylase family. Type 1 subfamily. In terms of assembly, homodimer.

The enzyme catalyses orotidine 5'-phosphate + H(+) = UMP + CO2. It functions in the pathway pyrimidine metabolism; UMP biosynthesis via de novo pathway; UMP from orotate: step 2/2. Catalyzes the decarboxylation of orotidine 5'-monophosphate (OMP) to uridine 5'-monophosphate (UMP). This chain is Orotidine 5'-phosphate decarboxylase, found in Streptococcus thermophilus (strain ATCC BAA-491 / LMD-9).